A 432-amino-acid chain; its full sequence is Enolase (432 aa).

Glutamine 163 contributes to the (2R)-2-phosphoglycerate binding site. Residue glutamate 205 is the Proton donor of the active site. 3 residues coordinate Mg(2+): aspartate 242, glutamate 285, and aspartate 312. The (2R)-2-phosphoglycerate site is built by lysine 337, arginine 366, serine 367, and lysine 388. Lysine 337 functions as the Proton acceptor in the catalytic mechanism.

It belongs to the enolase family. Requires Mg(2+) as cofactor.

It localises to the cytoplasm. Its subcellular location is the secreted. The protein localises to the cell surface. It catalyses the reaction (2R)-2-phosphoglycerate = phosphoenolpyruvate + H2O. It participates in carbohydrate degradation; glycolysis; pyruvate from D-glyceraldehyde 3-phosphate: step 4/5. Functionally, catalyzes the reversible conversion of 2-phosphoglycerate (2-PG) into phosphoenolpyruvate (PEP). It is essential for the degradation of carbohydrates via glycolysis. In Bifidobacterium longum subsp. infantis (strain ATCC 15697 / DSM 20088 / JCM 1222 / NCTC 11817 / S12), this protein is Enolase.